The primary structure comprises 434 residues: UDP-N-acetylmuramoylalanine--D-glutamate ligase (434 aa).

113–119 (GSNGKST) provides a ligand contact to ATP.

This sequence belongs to the MurCDEF family.

Its subcellular location is the cytoplasm. It carries out the reaction UDP-N-acetyl-alpha-D-muramoyl-L-alanine + D-glutamate + ATP = UDP-N-acetyl-alpha-D-muramoyl-L-alanyl-D-glutamate + ADP + phosphate + H(+). It functions in the pathway cell wall biogenesis; peptidoglycan biosynthesis. Functionally, cell wall formation. Catalyzes the addition of glutamate to the nucleotide precursor UDP-N-acetylmuramoyl-L-alanine (UMA). The polypeptide is UDP-N-acetylmuramoylalanine--D-glutamate ligase (Pasteurella multocida (strain Pm70)).